The primary structure comprises 246 residues: uncharacterized protein (246 aa).

10-34 (VITGASSGIGEETVNLLSENGAKLV) is an NADP(+) binding site. S140 contacts substrate. Y153 acts as the Proton acceptor in catalysis.

It belongs to the short-chain dehydrogenases/reductases (SDR) family.

This is an uncharacterized protein from Staphylococcus saprophyticus subsp. saprophyticus (strain ATCC 15305 / DSM 20229 / NCIMB 8711 / NCTC 7292 / S-41).